Here is a 316-residue protein sequence, read N- to C-terminus: Ribosomal protein L11 methyltransferase (316 aa).

Threonine 157, glycine 178, aspartate 200, and asparagine 243 together coordinate S-adenosyl-L-methionine.

It belongs to the methyltransferase superfamily. PrmA family.

The protein resides in the cytoplasm. It catalyses the reaction L-lysyl-[protein] + 3 S-adenosyl-L-methionine = N(6),N(6),N(6)-trimethyl-L-lysyl-[protein] + 3 S-adenosyl-L-homocysteine + 3 H(+). In terms of biological role, methylates ribosomal protein L11. This chain is Ribosomal protein L11 methyltransferase, found in Streptococcus pneumoniae (strain Hungary19A-6).